The chain runs to 100 residues: Signal recognition particle 19 kDa protein (100 aa).

It belongs to the SRP19 family. Part of the signal recognition particle protein translocation system, which is composed of SRP and FtsY. Archaeal SRP consists of a 7S RNA molecule of 300 nucleotides and two protein subunits: SRP54 and SRP19.

It is found in the cytoplasm. In terms of biological role, involved in targeting and insertion of nascent membrane proteins into the cytoplasmic membrane. Binds directly to 7S RNA and mediates binding of the 54 kDa subunit of the SRP. The protein is Signal recognition particle 19 kDa protein of Pyrococcus furiosus (strain ATCC 43587 / DSM 3638 / JCM 8422 / Vc1).